Consider the following 68-residue polypeptide: U1-agatoxin-Ta1c (68 aa).

The signal sequence occupies residues 1-17; it reads MKLQLMICLVLLPCFFC. Cystine bridges form between C23–C53, C39–C49, and C42–C62. K67 is subject to Lysine amide.

This sequence belongs to the helical arthropod-neuropeptide-derived (HAND) family. As to expression, expressed by the venom gland.

It localises to the secreted. Its function is as follows. Toxin that paralyzes insects. May have a direct effect on the insect central nervous system. This Eratigena agrestis (Hobo spider) protein is U1-agatoxin-Ta1c.